Consider the following 500-residue polypeptide: Perfringolysin O (500 aa).

Positions 1-28 are cleaved as a signal peptide; the sequence is MIRFKKTKLIASIAMALCLFSQPVISFS. 4 beta stranded membrane-spanning segments follow: residues 189–202, 209–218, 287–296, and 304–316; these read KSQI…NAKV, VDFNAVANNE, SKDVQAAFKA, and KNSQ…YENS. A Conserved undecapeptide motif is present at residues 458–468; it reads ECTGLAWEWWR. The Cholesterol binding signature appears at 490–491; that stretch reads TL.

It belongs to the cholesterol-dependent cytolysin family. In terms of assembly, modeling based on cryo-EM shows a homooligomeric pore complex containing 38-44 subunits; when inserted in the host membrane.

The protein localises to the secreted. It is found in the host cell membrane. A cholesterol-dependent toxin that causes cytolysis by forming pores in cholesterol-containing host membranes. After binding to target membranes, the protein assembles into a pre-pore complex. A major conformational change leads to insertion in the host membrane and formation of an oligomeric pore complex. Cholesterol is required for binding to host cell membranes, membrane insertion and pore formation; cholesterol binding is mediated by a Thr-Leu pair in the C-terminus. Can be reversibly inactivated by oxidation. The sequence is that of Perfringolysin O (pfo) from Clostridium perfringens (strain 13 / Type A).